The following is a 633-amino-acid chain: Threonine--tRNA ligase (633 aa).

An editing domain region spans residues 1 to 143; the sequence is MRALFLHSNR…SRTIKPKKVK (143 aa). Catalytic stretches follow at residues 220-515 and 221-515; these read NPLN…PVLP and PLND…PVLP. Zn(2+)-binding residues include C314, H365, and H488.

The protein belongs to the class-II aminoacyl-tRNA synthetase family. In terms of assembly, homodimer. It depends on Zn(2+) as a cofactor.

The protein resides in the cytoplasm. The catalysed reaction is tRNA(Thr) + L-threonine + ATP = L-threonyl-tRNA(Thr) + AMP + diphosphate + H(+). In terms of biological role, catalyzes the attachment of threonine to tRNA(Thr) in a two-step reaction: L-threonine is first activated by ATP to form Thr-AMP and then transferred to the acceptor end of tRNA(Thr). Also edits incorrectly charged L-seryl-tRNA(Thr). This Nanoarchaeum equitans (strain Kin4-M) protein is Threonine--tRNA ligase.